Consider the following 195-residue polypeptide: MMAIRELKVCLLGDTGVGKSSIVCRFVQDHFDHNISPTIGASFMTKTVPCGNELHKFLIWDTAGQERFHSLAPMYYRGSAAAVIVYDITKQDSFYTLKKWVKELKEHGPENIVMAIAGNKCDLSDIREVPLKDAKEYAESIGAIVVETSAKNAINIEELFQGISRQIPPLDPHENGNNGTIKVEKPTMQASRRCC.

G16, G18, K19, S20, S21, D32, and H33 together coordinate GTP. S20 lines the Mg(2+) pocket. 2 short sequence motifs (switch) span residues 30 to 42 (HFDH…IGAS) and 63 to 79 (AGQE…YRGS). Position 36 is a phosphoserine (S36). GTP-binding residues include T38, G64, N119, D122, A150, and K151. Residue T38 coordinates Mg(2+). S-geranylgeranyl cysteine attachment occurs at residues C194 and C195.

The protein belongs to the small GTPase superfamily. Rab family. As to quaternary structure, interacts with OCRL. Interacts with NGFR. Interacts (in GDP-bound form) with RIN3 and GAPVD1, which function as guanine exchange factors (GEF). Interacts (in GTP-bound form) with EEA1. Interacts with EGFR. Interacts (in GTP-bound form) with APPL2; interaction contributes to or enhances recruitment of APPL2 to the phagosomes; interaction enhances Fc-gamma receptor-mediated phagocytosis through PI3K/Akt signaling in macrophages. The cofactor is Mg(2+). As to expression, highest expression in placenta and brain with lower levels in heart and lung. Not detected in liver, skeletal muscle, kidney or pancreas.

The protein localises to the golgi apparatus. It localises to the trans-Golgi network. It is found in the trans-Golgi network membrane. The protein resides in the early endosome. Its subcellular location is the cytoplasmic vesicle. The protein localises to the phagosome. It localises to the phagosome membrane. The enzyme catalyses GTP + H2O = GDP + phosphate + H(+). With respect to regulation, regulated by guanine nucleotide exchange factors (GEFs) including RIN3 and GAPVD1 which promote the exchange of bound GDP for free GTP. Regulated by GTPase activating proteins (GAPs) which increase the GTP hydrolysis activity. Inhibited by GDP dissociation inhibitors (GDIs) which prevent Rab-GDP dissociation. Its function is as follows. The small GTPases Rab are key regulators of intracellular membrane trafficking, from the formation of transport vesicles to their fusion with membranes. Rabs cycle between an inactive GDP-bound form and an active GTP-bound form that is able to recruit to membranes different set of downstream effectors directly responsible for vesicle formation, movement, tethering and fusion. Required for the integrity and for normal function of the Golgi apparatus and the trans-Golgi network. Plays a role in insulin-stimulated translocation of GLUT4 to the cell membrane. Plays a role in M6PR transport from the trans-Golgi network to endosomes. Plays a role in the internalization of EGFR from the cell membrane into endosomes. Plays a role in the maturation of phagosomes that engulf pathogens, such as S.aureus and M.tuberculosis. This chain is Ras-related protein Rab-31, found in Homo sapiens (Human).